The sequence spans 763 residues: Phosphoglycerol transferase I (763 aa).

The next 4 membrane-spanning stretches (helical) occupy residues 1-21 (MSEL…AWKA), 26-46 (WWFA…ITLY), 77-97 (ILPG…LGWV), and 108-128 (VGYS…SPAF).

The protein belongs to the OpgB family.

The protein resides in the cell inner membrane. It catalyses the reaction a phosphatidylglycerol + a membrane-derived-oligosaccharide D-glucose = a 1,2-diacyl-sn-glycerol + a membrane-derived-oligosaccharide 6-(glycerophospho)-D-glucose.. Its pathway is glycan metabolism; osmoregulated periplasmic glucan (OPG) biosynthesis. Transfers a phosphoglycerol residue from phosphatidylglycerol to the membrane-bound nascent glucan backbones. The sequence is that of Phosphoglycerol transferase I from Salmonella choleraesuis (strain SC-B67).